An 83-amino-acid chain; its full sequence is Small ribosomal subunit protein eS21 (83 aa).

The protein belongs to the eukaryotic ribosomal protein eS21 family. As to quaternary structure, component of the 40S small ribosomal subunit.

The protein resides in the cytoplasm. It localises to the cytosol. The protein localises to the rough endoplasmic reticulum. This chain is Small ribosomal subunit protein eS21 (RpS21), found in Biphyllus lunatus (Beetle).